A 1015-amino-acid chain; its full sequence is Probable beta-galactosidase B (1015 aa).

A signal peptide spans 1-21 (MAHIYRLLLLLLSNLWFSAAA). N-linked (GlcNAc...) asparagine glycosylation occurs at N23. Position 90 (Y90) interacts with substrate. N100 carries an N-linked (GlcNAc...) asparagine glycan. N135, A136, and E137 together coordinate substrate. N-linked (GlcNAc...) asparagine glycosylation occurs at N172. N195 contacts substrate. E196 serves as the catalytic Proton donor. N-linked (GlcNAc...) asparagine glycosylation is present at N211. Y265 contributes to the substrate binding site. The cysteines at positions 271 and 324 are disulfide-linked. E308 acts as the Nucleophile in catalysis. Y373 provides a ligand contact to substrate. N411, N441, N456, N554, N679, N735, N775, N821, and N878 each carry an N-linked (GlcNAc...) asparagine glycan.

The protein belongs to the glycosyl hydrolase 35 family.

The protein resides in the secreted. The enzyme catalyses Hydrolysis of terminal non-reducing beta-D-galactose residues in beta-D-galactosides.. Its function is as follows. Cleaves beta-linked terminal galactosyl residues from gangliosides, glycoproteins, and glycosaminoglycans. In Neosartorya fischeri (strain ATCC 1020 / DSM 3700 / CBS 544.65 / FGSC A1164 / JCM 1740 / NRRL 181 / WB 181) (Aspergillus fischerianus), this protein is Probable beta-galactosidase B (lacB).